The chain runs to 120 residues: Large ribosomal subunit protein uL18 (120 aa).

The protein belongs to the universal ribosomal protein uL18 family. As to quaternary structure, part of the 50S ribosomal subunit; part of the 5S rRNA/L5/L18/L25 subcomplex. Contacts the 5S and 23S rRNAs.

This is one of the proteins that bind and probably mediate the attachment of the 5S RNA into the large ribosomal subunit, where it forms part of the central protuberance. In Agrobacterium fabrum (strain C58 / ATCC 33970) (Agrobacterium tumefaciens (strain C58)), this protein is Large ribosomal subunit protein uL18.